Here is a 467-residue protein sequence, read N- to C-terminus: Tubulin beta-1 chain (467 aa).

Residues Q11, E69, S138, G142, T143, G144, N204, and N226 each contribute to the GTP site. A Mg(2+)-binding site is contributed by E69. Over residues 429-444 the composition is skewed to acidic residues; sequence TIDDEEGGEEEEGGAE. The interval 429–448 is disordered; the sequence is TIDDEEGGEEEEGGAEEEAR.

It belongs to the tubulin family. Dimer of alpha and beta chains. A typical microtubule is a hollow water-filled tube with an outer diameter of 25 nm and an inner diameter of 15 nM. Alpha-beta heterodimers associate head-to-tail to form protofilaments running lengthwise along the microtubule wall with the beta-tubulin subunit facing the microtubule plus end conferring a structural polarity. Microtubules usually have 13 protofilaments but different protofilament numbers can be found in some organisms and specialized cells. It depends on Mg(2+) as a cofactor.

Its subcellular location is the cytoplasm. The protein localises to the cytoskeleton. It localises to the spindle. It is found in the nucleus. Tubulin is the major constituent of microtubules, a cylinder consisting of laterally associated linear protofilaments composed of alpha- and beta-tubulin heterodimers. Microtubules grow by the addition of GTP-tubulin dimers to the microtubule end, where a stabilizing cap forms. Below the cap, tubulin dimers are in GDP-bound state, owing to GTPase activity of alpha-tubulin. This Physarum polycephalum (Slime mold) protein is Tubulin beta-1 chain (BETA).